We begin with the raw amino-acid sequence, 542 residues long: MAKDIKFSEDARRAMLRGVDQLANAVKVTLGPKGRNVVLEKKFGSPLITNDGVTIAKEIELEDPFENMGAKLVSEVASKTNDVAGDGTTTATVLAQAMIQEGLKNVTAGANPVGVRRGIEKAVATAIEELKAISKPIESKESIAQVAAISSGDEEVGKLIAEAMERVGNDGVITIEESKGFATELDVVEGMQFDRGYTSPYMVTDSDKMEAVLEKPYILITDKKINNIQEILPVLEQVVQQGRPMLIIAEDVEGEAQATLVLNKLRGTFNVVAVKAPGFGDRRKAMLEDIAILTGGQVITEDLGLELKTATVDQLGTANKVVVTKDDTTIVEGAGDSTQISARVNQIRAQMEETTSEFDREKLQERLAKLAGGVAVVKVGAATETELKERKLRIEDALNSTRAAVEEGIVAGGGTALVSIYNKVAALEAEGDVETGINIVLRSLEEPVRQIAHNAGLEGSVIVERLKHEAVGVGFNAANGEWVNMIDAGIVDPTKVTRSALQNASSVAALLLTTEAVVADQPDENGPAAVPDMGMGGMGGMM.

ATP-binding positions include 29 to 32, 86 to 90, glycine 413, 476 to 478, and aspartate 492; these read TLGP, DGTTT, and NAA.

It belongs to the chaperonin (HSP60) family. In terms of assembly, forms a cylinder of 14 subunits composed of two heptameric rings stacked back-to-back. Interacts with the co-chaperonin GroES.

The protein localises to the cytoplasm. The enzyme catalyses ATP + H2O + a folded polypeptide = ADP + phosphate + an unfolded polypeptide.. Its function is as follows. Together with its co-chaperonin GroES, plays an essential role in assisting protein folding. The GroEL-GroES system forms a nano-cage that allows encapsulation of the non-native substrate proteins and provides a physical environment optimized to promote and accelerate protein folding. The chain is Chaperonin GroEL from Listeria welshimeri serovar 6b (strain ATCC 35897 / DSM 20650 / CCUG 15529 / CIP 8149 / NCTC 11857 / SLCC 5334 / V8).